A 176-amino-acid chain; its full sequence is Macro domain-containing protein mll7730 (176 aa).

Residues Met-1–Arg-174 enclose the Macro domain.

Belongs to the MacroD-type family.

In Mesorhizobium japonicum (strain LMG 29417 / CECT 9101 / MAFF 303099) (Mesorhizobium loti (strain MAFF 303099)), this protein is Macro domain-containing protein mll7730.